A 635-amino-acid polypeptide reads, in one-letter code: Threonine--tRNA ligase (635 aa).

The region spanning 1 to 61 (MINISFPDGS…DNDCKLRILT (61 aa)) is the TGS domain. Positions 242-533 (DHRKLGRELD…LIEEYAGRFP (292 aa)) are catalytic. The Zn(2+) site is built by Cys333, His384, and His510.

The protein belongs to the class-II aminoacyl-tRNA synthetase family. As to quaternary structure, homodimer. The cofactor is Zn(2+).

The protein localises to the cytoplasm. The enzyme catalyses tRNA(Thr) + L-threonine + ATP = L-threonyl-tRNA(Thr) + AMP + diphosphate + H(+). In terms of biological role, catalyzes the attachment of threonine to tRNA(Thr) in a two-step reaction: L-threonine is first activated by ATP to form Thr-AMP and then transferred to the acceptor end of tRNA(Thr). Also edits incorrectly charged L-seryl-tRNA(Thr). The chain is Threonine--tRNA ligase from Rickettsia africae (strain ESF-5).